A 101-amino-acid polypeptide reads, in one-letter code: NADH-quinone oxidoreductase subunit K 1 (101 aa).

3 helical membrane-spanning segments follow: residues I4–V24, V31–F51, and I64–F84.

It belongs to the complex I subunit 4L family. In terms of assembly, NDH-1 is composed of 14 different subunits. Subunits NuoA, H, J, K, L, M, N constitute the membrane sector of the complex.

It localises to the cell inner membrane. The enzyme catalyses a quinone + NADH + 5 H(+)(in) = a quinol + NAD(+) + 4 H(+)(out). In terms of biological role, NDH-1 shuttles electrons from NADH, via FMN and iron-sulfur (Fe-S) centers, to quinones in the respiratory chain. The immediate electron acceptor for the enzyme in this species is believed to be ubiquinone. Couples the redox reaction to proton translocation (for every two electrons transferred, four hydrogen ions are translocated across the cytoplasmic membrane), and thus conserves the redox energy in a proton gradient. This is NADH-quinone oxidoreductase subunit K 1 from Koribacter versatilis (strain Ellin345).